The primary structure comprises 428 residues: Sulfhydrogenase 1 subunit alpha (428 aa).

Positions 65, 68, 418, and 421 each coordinate Ni(2+). Cysteine 68 lines the Fe cation pocket. Position 421 (cysteine 421) interacts with Fe cation.

This sequence belongs to the [NiFe]/[NiFeSe] hydrogenase large subunit family. Heterotetramer of alpha, beta, gamma and delta subunits. The nickel-containing alpha and delta subunits constitute the hydrogenase activity. The beta and gamma subunits (flavin-containing dimer) constitute the sulfur reductase activity. The cofactor is Ni(2+). Requires Fe cation as cofactor.

It localises to the cytoplasm. The catalysed reaction is H2 + NADP(+) = NADPH + H(+). Functionally, part of a bifunctional enzyme complex that functions as an NADPH-dependent hydrogen-evolving hydrogenase with sulfur-reducing activity. May play a role in hydrogen cycling during fermentative growth. Activity not exhibited with NAD. The alpha and delta subunits form the hydrogenase component that catalyzes the reduction of protons to evolve hydrogen. The protein is Sulfhydrogenase 1 subunit alpha of Pyrococcus furiosus (strain ATCC 43587 / DSM 3638 / JCM 8422 / Vc1).